Here is a 172-residue protein sequence, read N- to C-terminus: Small ribosomal subunit protein uS5 (172 aa).

In terms of domain architecture, S5 DRBM spans 13–76; that stretch reads LVEKMISVNR…EQARHNMMKI (64 aa).

This sequence belongs to the universal ribosomal protein uS5 family. In terms of assembly, part of the 30S ribosomal subunit. Contacts proteins S4 and S8.

In terms of biological role, with S4 and S12 plays an important role in translational accuracy. Its function is as follows. Located at the back of the 30S subunit body where it stabilizes the conformation of the head with respect to the body. This chain is Small ribosomal subunit protein uS5, found in Chromobacterium violaceum (strain ATCC 12472 / DSM 30191 / JCM 1249 / CCUG 213 / NBRC 12614 / NCIMB 9131 / NCTC 9757 / MK).